Consider the following 436-residue polypeptide: 3-ketoacyl-CoA thiolase (436 aa).

Catalysis depends on C99, which acts as the Acyl-thioester intermediate. Active-site proton acceptor residues include H392 and C422.

Belongs to the thiolase-like superfamily. Thiolase family. As to quaternary structure, heterotetramer of two alpha chains (FadJ) and two beta chains (FadI).

It localises to the cytoplasm. It carries out the reaction an acyl-CoA + acetyl-CoA = a 3-oxoacyl-CoA + CoA. Its pathway is lipid metabolism; fatty acid beta-oxidation. Its function is as follows. Catalyzes the final step of fatty acid oxidation in which acetyl-CoA is released and the CoA ester of a fatty acid two carbons shorter is formed. The chain is 3-ketoacyl-CoA thiolase from Escherichia coli O81 (strain ED1a).